Reading from the N-terminus, the 130-residue chain is Small ribosomal subunit protein uS9 (130 aa).

This sequence belongs to the universal ribosomal protein uS9 family.

The protein is Small ribosomal subunit protein uS9 of Ralstonia nicotianae (strain ATCC BAA-1114 / GMI1000) (Ralstonia solanacearum).